The chain runs to 377 residues: NADH dehydrogenase [ubiquinone] 1 alpha subcomplex subunit 9, mitochondrial (377 aa).

A mitochondrion-targeting transit peptide spans 1–35 (MAAAAQSRVVRVLSMSRSAITAIATSVCHGPPCRQ). K175 carries the post-translational modification N6-succinyllysine. Residues K189 and K370 each carry the N6-acetyllysine modification.

Belongs to the complex I NDUFA9 subunit family. In terms of assembly, complex I is composed of 45 different subunits. This a component of the hydrophobic protein fraction. Interacts with BLOC1S1. Interacts with SLC2A4. Interacts with CLOCK. Interacts with RAB5IF. The cofactor is FAD. In terms of processing, acetylated on lysine residues. BLOC1S1 is required for acetylation.

Its subcellular location is the mitochondrion matrix. Accessory subunit of the mitochondrial membrane respiratory chain NADH dehydrogenase (Complex I), that is believed not to be involved in catalysis. Complex I functions in the transfer of electrons from NADH to the respiratory chain. The immediate electron acceptor for the enzyme is believed to be ubiquinone. This chain is NADH dehydrogenase [ubiquinone] 1 alpha subcomplex subunit 9, mitochondrial (NDUFA9), found in Gorilla gorilla gorilla (Western lowland gorilla).